The following is a 97-amino-acid chain: Citrate lyase acyl carrier protein (97 aa).

The residue at position 14 (serine 14) is an O-(phosphoribosyl dephospho-coenzyme A)serine.

Belongs to the CitD family. Oligomer with a subunit composition of (alpha,beta,gamma)6.

Its subcellular location is the cytoplasm. Functionally, covalent carrier of the coenzyme of citrate lyase. The chain is Citrate lyase acyl carrier protein from Oenococcus oeni (strain ATCC BAA-331 / PSU-1).